The sequence spans 228 residues: Cytochrome c oxidase subunit 2 (228 aa).

The Mitochondrial intermembrane segment spans residues 1–26 (MSTWANLGLQDSASPLMEQLIFFHDH). A helical membrane pass occupies residues 27-48 (ALLILVMITVLVGYLMFMLFFN). The Mitochondrial matrix portion of the chain corresponds to 49–62 (NYVNRFLLHGQLIE). A helical membrane pass occupies residues 63–82 (MIWTILPAIILLFIALPSLR). The Mitochondrial intermembrane segment spans residues 83–228 (LLYLLDEINE…FIKWISSNNS (146 aa)). Positions 161, 196, 198, 200, 204, and 207 each coordinate Cu cation. E198 provides a ligand contact to Mg(2+).

Belongs to the cytochrome c oxidase subunit 2 family. In terms of assembly, component of the cytochrome c oxidase (complex IV, CIV), a multisubunit enzyme composed of a catalytic core of 3 subunits and several supernumerary subunits. The complex exists as a monomer or a dimer and forms supercomplexes (SCs) in the inner mitochondrial membrane with ubiquinol-cytochrome c oxidoreductase (cytochrome b-c1 complex, complex III, CIII). It depends on Cu cation as a cofactor.

It is found in the mitochondrion inner membrane. The enzyme catalyses 4 Fe(II)-[cytochrome c] + O2 + 8 H(+)(in) = 4 Fe(III)-[cytochrome c] + 2 H2O + 4 H(+)(out). In terms of biological role, component of the cytochrome c oxidase, the last enzyme in the mitochondrial electron transport chain which drives oxidative phosphorylation. The respiratory chain contains 3 multisubunit complexes succinate dehydrogenase (complex II, CII), ubiquinol-cytochrome c oxidoreductase (cytochrome b-c1 complex, complex III, CIII) and cytochrome c oxidase (complex IV, CIV), that cooperate to transfer electrons derived from NADH and succinate to molecular oxygen, creating an electrochemical gradient over the inner membrane that drives transmembrane transport and the ATP synthase. Cytochrome c oxidase is the component of the respiratory chain that catalyzes the reduction of oxygen to water. Electrons originating from reduced cytochrome c in the intermembrane space (IMS) are transferred via the dinuclear copper A center (CU(A)) of subunit 2 and heme A of subunit 1 to the active site in subunit 1, a binuclear center (BNC) formed by heme A3 and copper B (CU(B)). The BNC reduces molecular oxygen to 2 water molecules using 4 electrons from cytochrome c in the IMS and 4 protons from the mitochondrial matrix. The sequence is that of Cytochrome c oxidase subunit 2 (mt:CoII) from Drosophila yakuba (Fruit fly).